The following is a 111-amino-acid chain: Kalata-B7 (111 aa).

The N-terminal stretch at 1 to 28 is a signal peptide; that stretch reads MAKFTNCLALCLLLAAVVGAFGVELSEA. A propeptide spanning residues 29-75 is cleaved from the precursor; sequence DKSAVVNEIAEKMALQEMLDGVDKLFLRKMKSSETTLTMFLKEMQLK. The cyclopeptide (Gly-Asn) cross-link spans 76 to 104; sequence GLPVCGETCTLGTCYTQGCTCSWPICKRN. 3 cysteine pairs are disulfide-bonded: Cys80–Cys94, Cys84–Cys96, and Cys89–Cys101. A propeptide spanning residues 105–111 is cleaved from the precursor; that stretch reads GLPDVAA.

In terms of processing, kalata-B7 is a cyclic peptide.

Its function is as follows. Probably participates in a plant defense mechanism. Has hemolytic activity. This chain is Kalata-B7 (OAK3), found in Oldenlandia affinis.